Consider the following 128-residue polypeptide: Sulfurtransferase TusD (128 aa).

The active-site Cysteine persulfide intermediate is cysteine 78.

It belongs to the DsrE/TusD family. In terms of assembly, heterohexamer, formed by a dimer of trimers. The hexameric TusBCD complex contains 2 copies each of TusB, TusC and TusD. The TusBCD complex interacts with TusE.

It localises to the cytoplasm. Functionally, part of a sulfur-relay system required for 2-thiolation of 5-methylaminomethyl-2-thiouridine (mnm(5)s(2)U) at tRNA wobble positions. Accepts sulfur from TusA and transfers it in turn to TusE. In Salmonella arizonae (strain ATCC BAA-731 / CDC346-86 / RSK2980), this protein is Sulfurtransferase TusD.